We begin with the raw amino-acid sequence, 158 residues long: Phosphopantetheine adenylyltransferase (158 aa).

Residue S9 participates in substrate binding. ATP-binding positions include 9–10 (SF) and H17. K41, T73, and R87 together coordinate substrate. Residues 88–90 (GLR), E98, and 122–128 (NQNISSS) contribute to the ATP site.

It belongs to the bacterial CoaD family. Homohexamer. It depends on Mg(2+) as a cofactor.

It is found in the cytoplasm. It catalyses the reaction (R)-4'-phosphopantetheine + ATP + H(+) = 3'-dephospho-CoA + diphosphate. Its pathway is cofactor biosynthesis; coenzyme A biosynthesis; CoA from (R)-pantothenate: step 4/5. Functionally, reversibly transfers an adenylyl group from ATP to 4'-phosphopantetheine, yielding dephospho-CoA (dPCoA) and pyrophosphate. The polypeptide is Phosphopantetheine adenylyltransferase (Leuconostoc citreum (strain KM20)).